We begin with the raw amino-acid sequence, 253 residues long: 28 kDa inner dynein arm light chain, axonemal (253 aa).

Residues 19–44 (TSKDKGKGAKGTPGKKGALPPVEQKP) form a disordered region. Residues 160 to 239 (IRKALQTEQG…LKQQLETFLV (80 aa)) adopt a coiled-coil conformation.

This sequence belongs to the inner dynein arm light chain family.

The protein localises to the cytoplasm. The protein resides in the cytoskeleton. It localises to the flagellum axoneme. In terms of biological role, plays a dynamic role in flagellar motility. May be necessary for stable assembly of a subset of inner dynein arms or for the binding of these arms to the outer doublet microtubules of the axoneme. The sequence is that of 28 kDa inner dynein arm light chain, axonemal (IDA4) from Chlamydomonas reinhardtii (Chlamydomonas smithii).